The following is an 872-amino-acid chain: Alanine--tRNA ligase (872 aa).

The Zn(2+) site is built by H563, H567, C665, and H669.

Belongs to the class-II aminoacyl-tRNA synthetase family. Requires Zn(2+) as cofactor.

It is found in the cytoplasm. The catalysed reaction is tRNA(Ala) + L-alanine + ATP = L-alanyl-tRNA(Ala) + AMP + diphosphate. Catalyzes the attachment of alanine to tRNA(Ala) in a two-step reaction: alanine is first activated by ATP to form Ala-AMP and then transferred to the acceptor end of tRNA(Ala). Also edits incorrectly charged Ser-tRNA(Ala) and Gly-tRNA(Ala) via its editing domain. In Bacteroides fragilis (strain YCH46), this protein is Alanine--tRNA ligase.